The chain runs to 784 residues: Ubiquitin carboxyl-terminal hydrolase 1 (784 aa).

Disordered stretches follow at residues 1–21 (MPGV…SKKN) and 34–56 (KRAL…RGSE). A compositionally biased stretch (polar residues) spans 7–16 (SESNGLSRGS). Residues S16 and S42 each carry the phosphoserine modification. Positions 45–56 (NEEKTSEYRGSE) are enriched in basic and acidic residues. Phosphoserine is present on S67. The 704-residue stretch at 81–784 (VGLNNLGNTC…TPYLLFYKKL (704 aa)) folds into the USP domain. C90 functions as the Nucleophile in the catalytic mechanism. Basic and acidic residues-rich tracts occupy residues 233 to 243 (VEEQSLQKEET) and 252 to 264 (DSMR…KEQL). Disordered stretches follow at residues 233-342 (VEEQ…INWL) and 362-414 (TTNQ…KSGN). S474 carries the post-translational modification Phosphoserine. The active-site Proton acceptor is H592. The disordered stretch occupies residues 684–725 (NPDKVVGTPFTDNRNSETNDTTNGTHESDRNKESSDQTGVNM). Residues 693–708 (FTDNRNSETNDTTNGT) are compositionally biased toward polar residues. Basic and acidic residues predominate over residues 709-718 (HESDRNKESS). Residue S767 is modified to Phosphoserine.

It belongs to the peptidase C19 family. Interacts with FANCD2 and PCNA. Interacts with WDR48. Interacts with ATAD5; the interaction regulates USP1-mediated PCNA deubiquitination. In terms of processing, autocatalytic cleavage of USP1 following UV irradiation inactivates it, leading to an increase in ubiquitinated PCNA, recruitment of POLH and translesion synthesis. Ubiquitinated by the CRL2(KLHDC2) complex following autocatalytic cleavage, leading to its degradation: the CRL2(KLHDC2) complex recognizes the diglycine (Gly-Gly) at the C-terminus.

It localises to the nucleus. It carries out the reaction Thiol-dependent hydrolysis of ester, thioester, amide, peptide and isopeptide bonds formed by the C-terminal Gly of ubiquitin (a 76-residue protein attached to proteins as an intracellular targeting signal).. Negative regulator of DNA damage repair which specifically deubiquitinates monoubiquitinated FANCD2. Also involved in PCNA-mediated translesion synthesis (TLS) by deubiquitinating monoubiquitinated PCNA. Has almost no deubiquitinating activity by itself and requires the interaction with WDR48 to have a high activity. The sequence is that of Ubiquitin carboxyl-terminal hydrolase 1 from Mus musculus (Mouse).